Consider the following 123-residue polypeptide: Protein HesB, vegetative (123 aa).

Belongs to the HesB/IscA family.

In terms of biological role, may be required for efficient nitrogen fixation. The sequence is that of Protein HesB, vegetative (hesB2) from Trichormus variabilis (strain ATCC 29413 / PCC 7937) (Anabaena variabilis).